Consider the following 388-residue polypeptide: Chalcone synthase D (388 aa).

C164 is an active-site residue.

This sequence belongs to the thiolase-like superfamily. Chalcone/stilbene synthases family.

The enzyme catalyses (E)-4-coumaroyl-CoA + 3 malonyl-CoA + 3 H(+) = 2',4,4',6'-tetrahydroxychalcone + 3 CO2 + 4 CoA. The protein operates within secondary metabolite biosynthesis; flavonoid biosynthesis. The primary product of this enzyme is 4,2',4',6'-tetrahydroxychalcone (also termed naringenin-chalcone or chalcone) which can under specific conditions spontaneously isomerize into naringenin. This chain is Chalcone synthase D (CHSD), found in Ipomoea nil (Japanese morning glory).